The chain runs to 234 residues: tRNA (guanine-N(1)-)-methyltransferase (234 aa).

Residues G115 and 135–140 (VGDYIL) each bind S-adenosyl-L-methionine.

This sequence belongs to the RNA methyltransferase TrmD family. Homodimer.

It localises to the cytoplasm. It carries out the reaction guanosine(37) in tRNA + S-adenosyl-L-methionine = N(1)-methylguanosine(37) in tRNA + S-adenosyl-L-homocysteine + H(+). Functionally, specifically methylates guanosine-37 in various tRNAs. The sequence is that of tRNA (guanine-N(1)-)-methyltransferase from Rickettsia peacockii (strain Rustic).